A 345-amino-acid polypeptide reads, in one-letter code: Phosphate acyltransferase (345 aa).

The protein belongs to the PlsX family. Homodimer. Probably interacts with PlsY.

Its subcellular location is the cytoplasm. The enzyme catalyses a fatty acyl-[ACP] + phosphate = an acyl phosphate + holo-[ACP]. The protein operates within lipid metabolism; phospholipid metabolism. In terms of biological role, catalyzes the reversible formation of acyl-phosphate (acyl-PO(4)) from acyl-[acyl-carrier-protein] (acyl-ACP). This enzyme utilizes acyl-ACP as fatty acyl donor, but not acyl-CoA. The protein is Phosphate acyltransferase of Wolbachia pipientis subsp. Culex pipiens (strain wPip).